A 690-amino-acid chain; its full sequence is Elongation factor G (690 aa).

The region spanning 8–283 (ERYRNFGIMA…AVVDFMPSPL (276 aa)) is the tr-type G domain. Residues 17 to 24 (AHIDAGKT), 81 to 85 (DTPGH), and 135 to 138 (NKLD) each bind GTP.

The protein belongs to the TRAFAC class translation factor GTPase superfamily. Classic translation factor GTPase family. EF-G/EF-2 subfamily.

It is found in the cytoplasm. In terms of biological role, catalyzes the GTP-dependent ribosomal translocation step during translation elongation. During this step, the ribosome changes from the pre-translocational (PRE) to the post-translocational (POST) state as the newly formed A-site-bound peptidyl-tRNA and P-site-bound deacylated tRNA move to the P and E sites, respectively. Catalyzes the coordinated movement of the two tRNA molecules, the mRNA and conformational changes in the ribosome. In Novosphingobium aromaticivorans (strain ATCC 700278 / DSM 12444 / CCUG 56034 / CIP 105152 / NBRC 16084 / F199), this protein is Elongation factor G.